Here is a 68-residue protein sequence, read N- to C-terminus: Protein SlyX homolog (68 aa).

It belongs to the SlyX family.

The chain is Protein SlyX homolog from Pseudomonas syringae pv. syringae (strain B728a).